We begin with the raw amino-acid sequence, 142 residues long: Large ribosomal subunit protein uL13 (142 aa).

It belongs to the universal ribosomal protein uL13 family. As to quaternary structure, part of the 50S ribosomal subunit.

Functionally, this protein is one of the early assembly proteins of the 50S ribosomal subunit, although it is not seen to bind rRNA by itself. It is important during the early stages of 50S assembly. In Stenotrophomonas maltophilia (strain K279a), this protein is Large ribosomal subunit protein uL13.